The following is a 676-amino-acid chain: Beta-galactosidase BgaP (676 aa).

R112 is a substrate binding site. C116 contacts Zn(2+). Residue N150 coordinates substrate. E151 acts as the Proton donor in catalysis. The Zn(2+) site is built by C156, C158, and C161. Residue E308 is the Nucleophile of the active site. Substrate-binding positions include W316 and 356 to 359 (EKYH).

Belongs to the glycosyl hydrolase 42 family. Homodimer.

The enzyme catalyses Hydrolysis of terminal non-reducing beta-D-galactose residues in beta-D-galactosides.. No activity lost during treatment with 100 mM EDTA after 2 hours, and the addition of 1 mM MgCl(2), 1 mM CaCl(2) or 1 mM MnCl(2) has no effect. However, the enzyme activity is inhibited by Zn(2+), Cu(2+), Ni(2+) and Co(2+) to different extents. Addition of Na(+) or K(+) slightly stimulates the enzyme activity at low concentrations and the optimal concentration is 250 mM. A further increase of their concentration of ions above the optimum value results in a decrease in enzyme activity. The enzyme is still active even in the presence of Na(+) or K(+) at a concentration up to 5 M. Its function is as follows. Hydrolyzes lactose, o-nitrophenyl-beta-D-galactopyranoside (ONPG), p-nitrophenyl-beta-D-galactopyranoside (PNPG), 5-bromo-4-chloro-3-indolyl-beta-D-galactopyranoside (X-gal), o-nitrophenyl-beta-D-fucopyranoside, p-nitrophenyl-beta-D-mannoside, o-nitrophenyl-beta-D-glucoside, p-nitrophenyl-beta-D-xyloside, p-nitrophenyl-beta-D-cellobioside, p-nitrophenyl-beta-D-arabinoside, p-nitrophenyl-beta-D-lactoside, p-nitrophenyl-beta-D-galacturonide, p-nitrophenyl-beta-D-glucuronide and p-nitrophenyl-alpha-D-galactoside with highest level of activity with ONPG as substrate, intermediate level of activity with PNPG and lower levels of activity with all other chromogenic nitrophenyl analogs. Able to hydrolyze 34% of milk lactose after 60 minutes at 5 degrees Celsius. The sequence is that of Beta-galactosidase BgaP from Planococcus sp. (strain L4).